The following is a 108-amino-acid chain: ATP-dependent Clp protease adapter protein ClpS (108 aa).

This sequence belongs to the ClpS family. In terms of assembly, binds to the N-terminal domain of the chaperone ClpA.

Its function is as follows. Involved in the modulation of the specificity of the ClpAP-mediated ATP-dependent protein degradation. This Ralstonia nicotianae (strain ATCC BAA-1114 / GMI1000) (Ralstonia solanacearum) protein is ATP-dependent Clp protease adapter protein ClpS.